The primary structure comprises 722 residues: Polyribonucleotide nucleotidyltransferase (722 aa).

The Mg(2+) site is built by D487 and D493. The KH domain maps to 554–613 (PRIETFKIPTDKIREVIGTGGKVIREIVEKTGAKVNIEDDGTVKVASSDGESIKAAIKWI). The S1 motif domain maps to 623 to 691 (GEIYEGTVVK…DRGKTRLSMK (69 aa)). The disordered stretch occupies residues 697–722 (TGEDLEAKQKAEAKAEGEAPAQAAGE). The span at 701–713 (LEAKQKAEAKAEG) shows a compositional bias: basic and acidic residues.

This sequence belongs to the polyribonucleotide nucleotidyltransferase family. Mg(2+) serves as cofactor.

It is found in the cytoplasm. It carries out the reaction RNA(n+1) + phosphate = RNA(n) + a ribonucleoside 5'-diphosphate. In terms of biological role, involved in mRNA degradation. Catalyzes the phosphorolysis of single-stranded polyribonucleotides processively in the 3'- to 5'-direction. The sequence is that of Polyribonucleotide nucleotidyltransferase from Rhodopseudomonas palustris (strain ATCC BAA-98 / CGA009).